The primary structure comprises 329 residues: Glycerol-3-phosphate dehydrogenase [NAD(P)+] (329 aa).

Residues Ser-13, Trp-14, His-34, and Lys-105 each coordinate NADPH. Sn-glycerol 3-phosphate-binding residues include Lys-105, Gly-134, and Ser-136. Ala-138 provides a ligand contact to NADPH. Sn-glycerol 3-phosphate-binding residues include Lys-189, Asp-242, Ser-252, Arg-253, and Asn-254. The active-site Proton acceptor is Lys-189. Position 253 (Arg-253) interacts with NADPH. 2 residues coordinate NADPH: Val-277 and Glu-279.

The protein belongs to the NAD-dependent glycerol-3-phosphate dehydrogenase family.

Its subcellular location is the cytoplasm. The enzyme catalyses sn-glycerol 3-phosphate + NAD(+) = dihydroxyacetone phosphate + NADH + H(+). It carries out the reaction sn-glycerol 3-phosphate + NADP(+) = dihydroxyacetone phosphate + NADPH + H(+). It functions in the pathway membrane lipid metabolism; glycerophospholipid metabolism. Its function is as follows. Catalyzes the reduction of the glycolytic intermediate dihydroxyacetone phosphate (DHAP) to sn-glycerol 3-phosphate (G3P), the key precursor for phospholipid synthesis. This Legionella pneumophila subsp. pneumophila (strain Philadelphia 1 / ATCC 33152 / DSM 7513) protein is Glycerol-3-phosphate dehydrogenase [NAD(P)+].